A 406-amino-acid chain; its full sequence is Putative odorant receptor 65b (406 aa).

Residues 1-55 (MDIQRFLKFYKVGWKTYRDPLMEASHSSIYYWREQMKAMALFTTTEERLLPYRSK) lie on the Cytoplasmic side of the membrane. A helical transmembrane segment spans residues 56-76 (WHTLVYIQMVIFFASMSFGLT). The Extracellular portion of the chain corresponds to 77–88 (ESMGDHVQMGRD). Residues 89-109 (LAFILGAFFIIFKTYYFCWYG) form a helical membrane-spanning segment. Residues 110–144 (DELDQVISDLDALHPWAQKGPNPVEYQTGKRWYFV) lie on the Cytoplasmic side of the membrane. A helical transmembrane segment spans residues 145–165 (MAFFLATSWSFFLCILLLLLI). Topologically, residues 166 to 218 (TSPMWVHQQNLPFHAAFPFQWHEKSLHPISHAIIYLFQSYFAVYCLTWLLCIE) are extracellular. The helical transmembrane segment at 219-239 (GLSICIYAEITFGIEVLCLEL) threads the bilayer. The Cytoplasmic portion of the chain corresponds to 240-275 (RQIHRHNYGLQELRMETNRLVKLHQKIVEILDRTND). A helical membrane pass occupies residues 276–296 (VFHGTLIMQMGVNFSLVSLSV). Residues 297–307 (LEAVEARKDPK) lie on the Extracellular side of the membrane. Residues 308–328 (VVAQFAVLMLLALGHLSMWSY) form a helical membrane-spanning segment. Residues 329 to 381 (CGDQLSQKSLQISEAAYEAYDPTKGSKDVYRDLCVIIRRGQDPLIMRASPFPS) are Cytoplasmic-facing. A helical transmembrane segment spans residues 382–402 (FNLINYSAILNQCYGILTFLL). The Extracellular portion of the chain corresponds to 403 to 406 (KTLD).

Belongs to the insect chemoreceptor superfamily. Heteromeric odorant receptor channel (TC 1.A.69) family. Or49a subfamily. Interacts with Orco. Complexes exist early in the endomembrane system in olfactory sensory neurons (OSNs), coupling these complexes to the conserved ciliary trafficking pathway.

The protein resides in the cell membrane. Functionally, odorant receptor which mediates acceptance or avoidance behavior, depending on its substrates. The odorant receptor repertoire encodes a large collection of odor stimuli that vary widely in identity, intensity, and duration. May form a complex with Orco to form odorant-sensing units, providing sensitive and prolonged odorant signaling and calcium permeability. The sequence is that of Putative odorant receptor 65b (Or65b) from Drosophila melanogaster (Fruit fly).